We begin with the raw amino-acid sequence, 256 residues long: Na(+)-translocating NADH-quinone reductase subunit E (256 aa).

6 helical membrane-spanning segments follow: residues Met1–Ile21, Met50–Ile70, Leu83–Phe103, Gly123–Ile143, Phe149–Ile169, and Met189–Ile209. Over residues Glu229–Ala249 the composition is skewed to polar residues. Residues Glu229 to Leu256 are disordered.

The protein belongs to the NqrDE/RnfAE family. Composed of six subunits; NqrA, NqrB, NqrC, NqrD, NqrE and NqrF.

Its subcellular location is the cell inner membrane. It carries out the reaction a ubiquinone + n Na(+)(in) + NADH + H(+) = a ubiquinol + n Na(+)(out) + NAD(+). In terms of biological role, NQR complex catalyzes the reduction of ubiquinone-1 to ubiquinol by two successive reactions, coupled with the transport of Na(+) ions from the cytoplasm to the periplasm. NqrA to NqrE are probably involved in the second step, the conversion of ubisemiquinone to ubiquinol. The protein is Na(+)-translocating NADH-quinone reductase subunit E of Chlamydia pneumoniae (Chlamydophila pneumoniae).